Consider the following 209-residue polypeptide: Probable E3 ubiquitin-protein ligase NleG7 (209 aa).

This sequence belongs to the NleG E3 ligase family. Two sizes of protein are detected in situ; only the smaller protein is secreted.

It localises to the secreted. Its subcellular location is the host cytoplasm. It carries out the reaction S-ubiquitinyl-[E2 ubiquitin-conjugating enzyme]-L-cysteine + [acceptor protein]-L-lysine = [E2 ubiquitin-conjugating enzyme]-L-cysteine + N(6)-ubiquitinyl-[acceptor protein]-L-lysine.. In terms of biological role, effector proteins function to alter host cell physiology and promote bacterial survival in host tissues. This protein is probably an E3 ubiquitin-protein ligase that interferes with the host's ubiquitination pathway and targets host proteins for proteasomal degradation. Mice infected with a strain of bacteria deleted for this gene were colonized less quickly by bacteria. This chain is Probable E3 ubiquitin-protein ligase NleG7, found in Citrobacter rodentium.